The following is a 116-amino-acid chain: NADH-ubiquinone oxidoreductase chain 3 (116 aa).

3 consecutive transmembrane segments (helical) span residues 4–24 (IIFL…AAHA), 56–76 (FFLV…LFPL), and 88–108 (LIPI…FEWI).

This sequence belongs to the complex I subunit 3 family.

It is found in the mitochondrion membrane. The enzyme catalyses a ubiquinone + NADH + 5 H(+)(in) = a ubiquinol + NAD(+) + 4 H(+)(out). Functionally, core subunit of the mitochondrial membrane respiratory chain NADH dehydrogenase (Complex I) that is believed to belong to the minimal assembly required for catalysis. Complex I functions in the transfer of electrons from NADH to the respiratory chain. The immediate electron acceptor for the enzyme is believed to be ubiquinone. This Strongylocentrotus purpuratus (Purple sea urchin) protein is NADH-ubiquinone oxidoreductase chain 3 (ND3).